The sequence spans 310 residues: UDP-N-acetylenolpyruvoylglucosamine reductase (310 aa).

The region spanning 34-211 (TGGPAQCVYV…REDMGKIAQE (178 aa)) is the FAD-binding PCMH-type domain. Arg177 is a catalytic residue. The Proton donor role is filled by Ser225. Glu295 is an active-site residue.

The protein belongs to the MurB family. It depends on FAD as a cofactor.

Its subcellular location is the cytoplasm. It catalyses the reaction UDP-N-acetyl-alpha-D-muramate + NADP(+) = UDP-N-acetyl-3-O-(1-carboxyvinyl)-alpha-D-glucosamine + NADPH + H(+). It functions in the pathway cell wall biogenesis; peptidoglycan biosynthesis. In terms of biological role, cell wall formation. The sequence is that of UDP-N-acetylenolpyruvoylglucosamine reductase from Beijerinckia indica subsp. indica (strain ATCC 9039 / DSM 1715 / NCIMB 8712).